Here is a 502-residue protein sequence, read N- to C-terminus: ATP synthase subunit alpha (502 aa).

169–176 provides a ligand contact to ATP; it reads GDRQVGKT.

Belongs to the ATPase alpha/beta chains family. F-type ATPases have 2 components, CF(1) - the catalytic core - and CF(0) - the membrane proton channel. CF(1) has five subunits: alpha(3), beta(3), gamma(1), delta(1), epsilon(1). CF(0) has three main subunits: a(1), b(2) and c(9-12). The alpha and beta chains form an alternating ring which encloses part of the gamma chain. CF(1) is attached to CF(0) by a central stalk formed by the gamma and epsilon chains, while a peripheral stalk is formed by the delta and b chains.

It is found in the cell membrane. It carries out the reaction ATP + H2O + 4 H(+)(in) = ADP + phosphate + 5 H(+)(out). In terms of biological role, produces ATP from ADP in the presence of a proton gradient across the membrane. The alpha chain is a regulatory subunit. The chain is ATP synthase subunit alpha from Lysinibacillus sphaericus (strain C3-41).